A 5043-amino-acid polypeptide reads, in one-letter code: MRNNDNIRILTNPSVSHGEPLHISEKQPATIPEVLYRTATELGDTKGIIYLQPDGTEVYQSYRRLWDDGLRIAKGLRQSGLKAKQSVILQLGDNSQLLPAFWGCVLTGVVPAPLAVPPTYAESSSGTQKLKDAWTLLDKPAVITDRGMHQEMLDWAKEQGLEGFRAIIVEDLLSAEADTDWHQSSPEDLALLLLTSGSTGTPKAVMLNHRNIMSMVKGIIQMQGFTREDITFNWMPFDHVGGIGMLHLRDVYLGCQEINVSSETILMEPLKWLDWIDHYRASVTWAPNFAFGLVTDFAEEIKDKKWDLSSMRYMLNGGEAMVAKVGRRILELLEPHGLPADAIRPAWGMSETSSGVIFSHEFTRAGTSDDDHFVEIGSPIPGFSMRIVNDHNELVEEGEIGRFQVSGLSVTSGYYQRPDLNESVFTEDGWFETGDLGFLRNGRLTITGRTKDAIIINGINYYSHAIESAVEELPEIETSYTAACAVRLGQNSTDQLAIFFVTSAKLNDEQMSQLLRNIQSHVSQVIGVTPEYLLPVQKEEIPKTAIGKIQRTQLKTSFENGEFDHLLHKPNRMNDAVQDEGIQQADQVKRVREEIQKHLLTCLTEELHVSHDWVEPNANIQSLGVNSIKMMKLIRSIEKNYHIKLTAREIHQYPTIERLASYLSEHEDLSSLSADKKGTDTYKTEPERSQATFQPLSEVQKGLWTLQKMSPEKSAYHVPLCFKFSSGLHHETFQQAFGLVLNQHPILKHVIQEKDGVPFLKNEPALSIEIKTENISSLKESDIPAFLRKKVKEPYVKENSPLVRVMSFSRSEQEHFLLVVIHHLIFDGVSSVTFIRSLFDTYQLLLKGQQPEKAVSPAIYHDFAAWEKNMLAGKDGVKHRTYWQKQLSGTLPNLQLPNVSASSVDSQFREDTYTRRLSSGFMNQVRTFAKEHSVNVTTVFLSCYMMLLGRYTGQKEQIVGMPAMVRPEERFDDAIGHFLNMLPIRSELNPADTFSSFISKLQLTILDGLDHAAYPFPKMVRDLNIPRSQAGSPVFQTAFFYQNFLQSGSYQSLLSRYADFFSVDFVEYIHQEGEYELVFELWETEEKMELNIKYNTGLFDAASISAMFDHFVYVTEQAMLNPSQPLKEYSLLPEAEKQMILKTWNATGKTYPYITFHELFEQQAKKTPDRAAVSYEGQTLTYRELDEKSTQLAIYLQAHGVGPDRLAGIYVDRSLDMLVGLLAILKAGGAYVPLDPSYPAERLEYMLEDSEVFITLTTSELVNTLSWNGVTTALLDQDWDEIAQTASDRKVLTRTVTPENLAYVIYTSGSTGKPKGVMIPHKALTNFLVSMGETPGLTAEDKMLAVTTYCFDIAALELFLPLIKGAHCYICQTEHTKDVEKLKRDIRAIKPTVMQATPATWKMLFYSGWENEESVKILCGGEALPETLKRYFLDTGSEAWNMFGPTETTIWSAVQRINVECSHATIGRPIANTQIYITDSQLAPVPAGVPGELCIAGDGVAKGYYKKEELTDSRFIDNPFEPGSKLYRTGDMARWLTGGRIEYIGRIDNQVKIRGFRIELGDIESRLSEHPGILECVVVADMDNLAAYYTAKHANASLTARELRHFVKNALPAYMVPSYFIQLDHMPLTPNGKIDRNSLKNIDLSGEQLKQRQTSPKNIQDTVFTIWQEVLKTSDIEWDDGFFDVGGDSLLAVTVADRIKHELSCEFSVTDLFEYSTIKNISQYITEQRMGDASDHIPTDPAAHIEDQSTEMSDLPDYYDDSVAIIGISCEFPGAKNHDEFWENLRDGKESIAFFNKEELQRFGISKEIAENADYVPAKASIDGKDRFDPSFFQISPKDAEFMDPQLRMLLTHSWKAIEDAGYAARQIPQTSVFMSASNNSYRALLPSDTTESLETPDGYVSWVLAQSGTIPTMISHKLGLRGPSYFVHANCSSSLIGLHSAYKSLLSGESDYALVGGATLHTESNIGYVHQPGLNFSSDGHIKAFDASADGMIGGEGVAVVLLKKAADAVKDGDHIYALLRGIGVNNDGADKVGFYAPSVKGQADVVQQVMNQTKVQPESICYVEAHGTGTKLGDPIELAALTNVYRQYTNKTQFCGIGSVKTNIGHLDTAAGLAGCIKVVMSLYHQELAPSVNYKEPNPNTDLASSPFYVVDQKKTLSREIKTHRAALSSFGLGGTNTHAIFEQFKRDSDKGKIDGTCIVPISAKNKERLQEYAEDILAYLERRGFENSQLPDFAYTLQVGREAMEHRVVFIADHVNELKQRLTDFINGNTAIEGCFQGSKHNAREVSWLTEDEDSAELIRKWMAKGKVNKLAEMWSKGAHIDWMQLYKGERPNRMSLPTYPFAKERYWPSQDDRKPVAQISGNQTGIGSIHPLLHQNTSDFSEQKFSSVFTGDEFFLRDHVVRGKPVLPGVAYLEMAYAAINQAAGSEIGQDVRIRLNHTVWVQPVVVDRHSAQVDISLFPEEDGKITFDIYSTQEDGDDPVIHSQGSAELASAAETPVADLTEMSRRCGKGKMSPDQFYEEGRSRGMFHGPAFQGIKNVNIGNREVLAQLQLPEIVSGTNEQFVLHPSIMDSALQTATICIMQELTDQKLILPFALEELEVIKGCSSSMWAYARLSDSDHSGGVVQKADIDVIDESGTVCVRIKGFSTRVLEGEVHTSKPSTRHERLMLEPVWEKQNEEREDEDLSYTEHIIVLFETERSVTDSIASHMKDARVITLNEAVGHIAERYQCYMQNIFELLQSKVRKLSAGRIIIQAIVPLEKEKQLFAGVSGLFKTAEIEFSKLTAQVIEIEKPEEMIDLHLKLKDDSRRPFDKQIRYEAGYRFVKGWREMVLPSADTLHMPWRDEGVYLITGGAGSLGLLFAKEIANRTGRSTIVLTGRSVLSEDKENELEALRSIGAEVVYREADVSDQHAVRHLLEEIKERYGTLNGIIHGAGSSKDRFIIHKTNEEFQEVLQPKVSGLLHVDECSKDFPLDFFIFFSSVSGCLGNAGQADYAAANSFMDAFAEYRRSLAASKKRFGSTISFNWPLWEEGGMQVGAEDEKRMLKTTGMVPMPTDSGLKAFYQGIVSDKPQVFVMEGQLQKMKQKLLSAGSKAKRNDQRKADQDQGQTRKLEAALIQMVGAILKVNTDDIDVNTELSEYGFDSVTFTVFTNKINEKFQLELTPTIFFEYGSVQSLAEYVVAAYQGEWNQDATAKGKDERTNLVHSLSSLEASLSNMVSAILKVNSEDIDVNTELSEYGFDSVTFTVFTNKINEEFQLELTPTIFFEYGSLHSLAEYLTVEHGDTLVQEREKPEGQEELQTKSSEAPKITSRRKRRFTQPIIAKAERNKKQAADFEPVAIVGISGRFPGAMDIDEFWKNLEEGKDSITEVPKDRWDWREHYGNPDTDVNKTDIKWGGFIDGVAEFDPLFFGISPREADYVDPQQRLLMTYVWKALEDAGCSPQSLSGTGTGIFIGTGNTGYKDLFHRANLPIEGHAATGHMIPSVGPNRMSYFLNIHGPSEPVETACSSSLVAIHRAVTAMQNGDCEMAIAGGVNTILTEEAHISYSKAGMLSTDGRCKTFSADANGYVRGEGVGMVMLKKLEDAERDGNHIYGVIRGTAENHGGRANTLTSPNPKAQADLLVRAYRQADIDPSTVTYIEAHGTGTELGDPIEINGLKAAFKELSNMRGESQPDVPDHRCGIGSVKSNIGHLELAAGISGLIKVLLQMKHKTLVKSLHCETLNPYLQLTDSPFYIVQEKQEWKSVTDRDGNELPRRAGISSFGIGGVNAHIVIEEYMPKANSEHTATEQPNVIVLSAKNKSRLIDRASQLLEVIRNKKYTDQDLHRIAYTLQVGREEMDERLACVAGTMQELEEKLQAFVDGKEETDEFFRGQSHRNKETQTIFTADEDMALALDAWIRKRKYAKLADLWVKGVSIQWNTLYGETKPRLISLPSYPFAKDHYWVPAKEHSERDKKELVNAIEDRAACFLTKQWSLSPIGSAVPGTRTVAILCCQETADLAAEVSSYFPNHLLIDVSRIENDQSDIDWKEFDGLVDVIGCGWDDEGRLDWIEWVQRLVEFGHKEGLRLLCVTKGLESFQNTSVRMAGASRAGLYRMLQCEYSHLISRHMDAEEVTDHRRLAKLIADEFYSDSYDAEVCYRDGLRYQAFLKAHPETGKATEQSAVFPKDHVLLITGGTRGIGLLCARHFAECYGVKKLVLTGREQLPPREEWARFKTSNTSLAEKIQAVRELEAKGVQVEMLSLTLSDDAQVEQTLQHIKRTLGPIGGVIHCAGLTDMDTLAFIRKTSDDIQRVLEPKVSGLTTLYRHVCNEPLQFFVLFSSVSAIIPELSAGQADYAMANSYMDYFAEAHQKHAPIISVQWPNWKETGMGEVTNQAYRDSGLLSITNSEGLRFLDQIVSKKFGPVVLPAMANQTNWEPELLMKRRKPHEGGLQEAALQSPPARDIEEADEVSKCDGLLSETQSWLIDLFTEELRIDREDFEIDGLFQDYGVDSIILAQVLQRINRKLEAALDPSILYEYPTIQRFADWLIGSYSERLSALFGGRISDASAPLENKIEAEASVPGKDRALTPQIQAPAILSPDSHAEGIAVVGLSCRFPGAETLESYWSLLSEGRSSIGPIPAERWGCKTPYYAGVIDGVSYFDPDFFLLHEEDVRAMDPQALLVLEECLKLLYHAGYTPEEIKGKPVGVYIGGRSQHKPDEDSLDHAKNPIVTVGQNYLAANLSQFFDVRGPSVVVDTACSSALVGMNMAIQALRGGDIQSAIVGGVSLLSSDASHRLFDRRGILSKHSSFHVFDERADGVVLGEGVGMVMLKTVKQALEDGDIIYAVVKAASVNNDGRTAGPATPNLEAQKEVMKDALFKSGKKPEDISYLEANGSGSIVTDLLELKAIQSVYRSGHSSPLSLGSIKPNIGHPLCAEGIASFIKVVLMLKERRFVPFLSGEKEMAHFDQQKANITFSRALEKWTDSQPTAAINCFADGGTNAHVIVEAWEKDEKHAIKRSPISPPQLKKRMLSPGEPKLEAETSKMTAANIWDTYEVEV.

Positions 141 to 481 are adenylation 1; sequence AVITDRGMHQ…ELPEIETSYT (341 aa). In terms of domain architecture, Carrier 1 spans 590-667; it reads RVREEIQKHL…RLASYLSEHE (78 aa). Serine 627 bears the O-(pantetheine 4'-phosphoryl)serine mark. Residues 690 to 989 form a condensation region; the sequence is QATFQPLSEV…NMLPIRSELN (300 aa). The interval 1181–1578 is adenylation 2; the sequence is TYRELDEKST…EHPGILECVV (398 aa). The 76-residue stretch at 1654–1729 folds into the Carrier 2 domain; that stretch reads TSPKNIQDTV…NISQYITEQR (76 aa). An O-(pantetheine 4'-phosphoryl)serine modification is found at serine 1689. In terms of domain architecture, Ketosynthase family 3 (KS3) 1 spans 1760–2186; the sequence is DDSVAIIGIS…GTNTHAIFEQ (427 aa). Active-site for beta-ketoacyl synthase 1 activity residues include cysteine 1932, histidine 2068, and histidine 2108. An N-terminal hotdog fold region spans residues 2374 to 2499; it reads HPLLHQNTSD…GSAELASAAE (126 aa). The region spanning 2374–2661 is the PKS/mFAS DH domain; sequence HPLLHQNTSD…TRVLEGEVHT (288 aa). Histidine 2403 (proton acceptor; for dehydratase activity) is an active-site residue. Positions 2513–2661 are C-terminal hotdog fold; it reads GKGKMSPDQF…TRVLEGEVHT (149 aa). Residue aspartate 2575 is the Proton donor; for dehydratase activity of the active site. 2 consecutive Carrier domains span residues 3114-3188 and 3212-3286; these read RKLE…VAAY and SSLE…TVEH. O-(pantetheine 4'-phosphoryl)serine occurs at positions 3148 and 3246. A disordered region spans residues 3291–3314; it reads VQEREKPEGQEELQTKSSEAPKIT. Residues 3339-3779 enclose the Ketosynthase family 3 (KS3) 2 domain; sequence FEPVAIVGIS…GVNAHIVIEE (441 aa). Active-site for beta-ketoacyl synthase 2 activity residues include cysteine 3511, histidine 3646, and histidine 3695. A coiled-coil region spans residues 3839–3872; that stretch reads REEMDERLACVAGTMQELEEKLQAFVDGKEETDE. The 78-residue stretch at 4459–4536 folds into the Carrier 5 domain; sequence GLLSETQSWL…RFADWLIGSY (78 aa). Residue serine 4496 is modified to O-(pantetheine 4'-phosphoryl)serine. The region spanning 4588–4992 is the Ketosynthase family 3 (KS3) 3 domain; the sequence is AEGIAVVGLS…GTNAHVIVEA (405 aa). Cysteine 4743 acts as the For beta-ketoacyl synthase 3 activity in catalysis.

Belongs to the ATP-dependent AMP-binding enzyme family. The cofactor is pantetheine 4'-phosphate.

It localises to the cytoplasm. It participates in antibiotic biosynthesis; bacillaene biosynthesis. In terms of biological role, involved in some intermediate steps for the synthesis of the antibiotic polyketide bacillaene which is involved in secondary metabolism. The chain is Polyketide synthase PksJ (pksJ) from Bacillus subtilis (strain 168).